A 354-amino-acid chain; its full sequence is Nicotinate-nucleotide--dimethylbenzimidazole phosphoribosyltransferase (354 aa).

Glutamate 313 serves as the catalytic Proton acceptor.

Belongs to the CobT family.

The enzyme catalyses 5,6-dimethylbenzimidazole + nicotinate beta-D-ribonucleotide = alpha-ribazole 5'-phosphate + nicotinate + H(+). Its pathway is nucleoside biosynthesis; alpha-ribazole biosynthesis; alpha-ribazole from 5,6-dimethylbenzimidazole: step 1/2. Catalyzes the synthesis of alpha-ribazole-5'-phosphate from nicotinate mononucleotide (NAMN) and 5,6-dimethylbenzimidazole (DMB). In Ralstonia nicotianae (strain ATCC BAA-1114 / GMI1000) (Ralstonia solanacearum), this protein is Nicotinate-nucleotide--dimethylbenzimidazole phosphoribosyltransferase.